Here is a 458-residue protein sequence, read N- to C-terminus: Ammonium transporter Rh type B (458 aa).

The Cytoplasmic portion of the chain corresponds to 1-13; the sequence is MAGSSRRAGGRRL. The helical transmembrane segment at 14–34 threads the bilayer; sequence QLPLLCLLLQGATAILFAVFV. Over 35–61 the chain is Extracellular; that stretch reads RYNHETDAALWHWGNHSNPDNEFYFRY. N-linked (GlcNAc...) asparagine glycosylation is present at asparagine 49. The chain crosses the membrane as a helical span at residues 62–82; sequence PSFQDVHTMIFVGFGFLMAFL. Topologically, residues 83 to 86 are cytoplasmic; that stretch reads QRYG. The helical transmembrane segment at 87 to 107 threads the bilayer; the sequence is FSSVGFTFLLAAFALQWSTLV. Over 108 to 124 the chain is Extracellular; the sequence is QGFLHTFHGGHIHIGVE. Residues 125 to 145 traverse the membrane as a helical segment; it reads SMINADFCAGAVLISFGAILG. Residues 146–149 lie on the Cytoplasmic side of the membrane; the sequence is KTGP. A helical membrane pass occupies residues 150–170; the sequence is AQLLLMALLEVVLFGLNEFVL. Residues 171–178 lie on the Extracellular side of the membrane; it reads LSLLGVKD. The helical transmembrane segment at 179–201 threads the bilayer; the sequence is AGGSMTIHTFGAYFGLVLSRVLY. Over 202–219 the chain is Cytoplasmic; sequence RPQLEKSKHRQSSVYHSD. Residues 220 to 240 form a helical membrane-spanning segment; the sequence is LFAMIGTIFLWIFWPSFNSAP. Over 241-251 the chain is Extracellular; sequence TPLGDGQHRTA. A helical transmembrane segment spans residues 252–272; sequence LNTYYSLTASTLSTFALSALV. The Cytoplasmic segment spans residues 273–282; that stretch reads GRDGRLDMVH. A helical membrane pass occupies residues 283–303; that stretch reads VQNAALAGGVVVGTSAEMMLT. Residue proline 304 is a topological domain, extracellular. A helical transmembrane segment spans residues 305–325; sequence FGALAAGFLAGTVSTLGFKFF. Over 326–346 the chain is Cytoplasmic; sequence TPILESKFKIQDTCGVHNLHG. A helical transmembrane segment spans residues 347–367; that stretch reads MPGVLGALLGVLVAGLATHDS. Residues 368–393 lie on the Extracellular side of the membrane; it reads YGEGLESVFPLIAEGQRSSTSQALHQ. The helical transmembrane segment at 394 to 414 threads the bilayer; that stretch reads LFGLFVTLIFASVGGGLGGLL. The Cytoplasmic portion of the chain corresponds to 415–458; sequence LRLPFLDSPPDSQCYEDQIYWEVPEEHADLAQGSLRPEEPDTQA. Residues 416–424 form an interaction with ANK3 region; sequence RLPFLDSPP. The short motif at 429-432 is the Basolateral sorting signal element; the sequence is YEDQ.

This sequence belongs to the ammonium transporter (TC 2.A.49) family. Rh subfamily. In terms of assembly, interacts (via C-terminus) with ANK2 and ANK3; required for targeting to the basolateral membrane. In terms of processing, N-glycosylated.

It localises to the cell membrane. It is found in the basolateral cell membrane. It carries out the reaction NH4(+)(in) = NH4(+)(out). The catalysed reaction is methylamine(out) = methylamine(in). It catalyses the reaction CO2(out) = CO2(in). In terms of biological role, ammonium transporter involved in the maintenance of acid-base homeostasis. Transports ammonium and its related derivative methylammonium across the basolateral plasma membrane of epithelial cells likely contributing to renal transepithelial ammonia transport and ammonia metabolism. May transport either NH4(+) or NH3 ammonia species predominantly mediating an electrogenic NH4(+) transport. May act as a CO2 channel providing for renal acid secretion. This chain is Ammonium transporter Rh type B (RHBG), found in Sus scrofa (Pig).